The chain runs to 321 residues: Sideroflexin-3 (321 aa).

Methionine 1 is modified (N-acetylmethionine). 4 consecutive transmembrane segments (helical) span residues 146-164 (LGMAYVSATTGAVATALGL), 174-194 (LVGRFVPFAAVAAANCINIPL), 226-246 (FQVVISRICMAIPAMAIPPVI), and 266-286 (LQMGLVGFCLVFATPLCCALF).

The protein belongs to the sideroflexin family.

It localises to the mitochondrion membrane. It catalyses the reaction L-serine(in) = L-serine(out). Mitochondrial serine transporter that mediates transport of serine into mitochondria, an important step of the one-carbon metabolism pathway. Mitochondrial serine is converted to glycine and formate, which then exits to the cytosol where it is used to generate the charged folates that serve as one-carbon donors. The protein is Sideroflexin-3 (SFXN3) of Bos taurus (Bovine).